The following is an 892-amino-acid chain: Translation initiation factor IF-2 (892 aa).

The segment covering 138-185 has biased composition (basic and acidic residues); that stretch reads QRNLAEQQRLAEVDRQRVEEQERKRREEEQAELERQKTESRVVEEILV. Disordered stretches follow at residues 138–250 and 262–298; these read QRNL…EDDS and AAER…SGAH. Low complexity predominate over residues 207 to 219; the sequence is LPRTVRPTPAARP. In terms of domain architecture, tr-type G spans 391-560; that stretch reads PRPPVVTIMG…SIQAEVLELK (170 aa). Residues 400 to 407, 446 to 450, and 500 to 503 contribute to the GTP site; these read GHVDHGKT, DTPGH, and SKID.

Belongs to the TRAFAC class translation factor GTPase superfamily. Classic translation factor GTPase family. IF-2 subfamily.

The protein localises to the cytoplasm. One of the essential components for the initiation of protein synthesis. Protects formylmethionyl-tRNA from spontaneous hydrolysis and promotes its binding to the 30S ribosomal subunits. Also involved in the hydrolysis of GTP during the formation of the 70S ribosomal complex. The protein is Translation initiation factor IF-2 of Xylella fastidiosa (strain Temecula1 / ATCC 700964).